A 339-amino-acid polypeptide reads, in one-letter code: Trace amine-associated receptor 2 (339 aa).

Over 1–36 the chain is Extracellular; sequence MASFEAQQETFDCSEYGNGSCPENERSLGVRAAMYS. N-linked (GlcNAc...) asparagine glycosylation is present at N18. Disulfide bonds link C21-C185 and C104-C189. The helical transmembrane segment at 37–57 threads the bilayer; that stretch reads LMACAIFITIFGNLAMIISIS. Over 58 to 67 the chain is Cytoplasmic; the sequence is YFKQLHTPTN. The chain crosses the membrane as a helical span at residues 68–88; sequence LLILSMAVTDFLLGFTIMPYS. Over 89 to 106 the chain is Extracellular; the sequence is MVRSVENCWYFGLTFCKI. The helical transmembrane segment at 107–127 threads the bilayer; sequence HYSFDLMLSITSIFHLCSVAV. The Cytoplasmic segment spans residues 128-150; sequence DRFYAICHPLHYCTKMTIPVVRR. A helical transmembrane segment spans residues 151 to 171; it reads LLLVCWSVPGAFAFGVVFSEA. Residues 172 to 195 are Extracellular-facing; it reads YADGIEGYDILVACSSSCPVMFNK. Residues 196 to 216 form a helical membrane-spanning segment; the sequence is LWGTTLFVAGFFTPSSMMVGI. The Cytoplasmic portion of the chain corresponds to 217-251; that stretch reads YGKIFAVSKKHARVIDNLPENQNNQMRKDKKAAKT. Residues 252–272 traverse the membrane as a helical segment; it reads LGIVMGVFLLCWFPCFFTILL. The Extracellular portion of the chain corresponds to 273–287; the sequence is DPFLNFSTPAVLFDA. Residue N277 is glycosylated (N-linked (GlcNAc...) asparagine). The helical transmembrane segment at 288-310 threads the bilayer; that stretch reads LTWFGYFNSTCNPLIYGFFYPWF. Topologically, residues 311–339 are cytoplasmic; sequence RRALKYILLGKIFSSHFHNTNLFTQKETE.

The protein belongs to the G-protein coupled receptor 1 family. As to expression, mainly expressed in neurons of the olfactory epithelium. Also present in the limbic brain areas receiving projection from the olfactory system and several brain regions, including the hippocampus, cerebellum, cortex, raphe nuclei, hypothalamus and habenula.

The protein resides in the cell membrane. Orphan olfactory receptor specific for trace amines. Trace amine compounds are enriched in animal body fluids and act on trace amine-associated receptors (TAARs) to elicit both intraspecific and interspecific innate behaviors. Ligand-binding causes a conformation change that triggers signaling via the G(s)-class of G-proteins which activate adenylate cyclase. May also be required to provide olfactory input into limbic brain areas to regulate emotional behaviors likely via modulation of the dopamine system. The sequence is that of Trace amine-associated receptor 2 from Mus musculus (Mouse).